The following is a 214-amino-acid chain: Small ribosomal subunit protein eS6 (214 aa).

This sequence belongs to the eukaryotic ribosomal protein eS6 family.

This chain is Small ribosomal subunit protein eS6, found in Saccharolobus solfataricus (strain ATCC 35092 / DSM 1617 / JCM 11322 / P2) (Sulfolobus solfataricus).